The primary structure comprises 245 residues: Ribonuclease PH (245 aa).

Phosphate-binding positions include Arg-86 and 124–126 (GTR).

This sequence belongs to the RNase PH family. In terms of assembly, homohexameric ring arranged as a trimer of dimers.

The enzyme catalyses tRNA(n+1) + phosphate = tRNA(n) + a ribonucleoside 5'-diphosphate. Its function is as follows. Phosphorolytic 3'-5' exoribonuclease that plays an important role in tRNA 3'-end maturation. Removes nucleotide residues following the 3'-CCA terminus of tRNAs; can also add nucleotides to the ends of RNA molecules by using nucleoside diphosphates as substrates, but this may not be physiologically important. Probably plays a role in initiation of 16S rRNA degradation (leading to ribosome degradation) during starvation. This is Ribonuclease PH from Bacillus cereus (strain G9842).